A 354-amino-acid polypeptide reads, in one-letter code: Heat-inducible transcription repressor HrcA (354 aa).

This sequence belongs to the HrcA family.

Its function is as follows. Negative regulator of class I heat shock genes (grpE-dnaK-dnaJ and groELS operons). Prevents heat-shock induction of these operons. The protein is Heat-inducible transcription repressor HrcA of Herpetosiphon aurantiacus (strain ATCC 23779 / DSM 785 / 114-95).